We begin with the raw amino-acid sequence, 602 residues long: NAD-dependent protein deacetylase sir-2.1 (602 aa).

The tract at residues 25–57 (PEIETMHIENSVEGESGRQRTESTASVNSESWQ) is disordered. Residues 46–57 (ESTASVNSESWQ) are compositionally biased toward polar residues. One can recognise a Deacetylase sirtuin-type domain in the interval 119–374 (KLFTYNSLSD…RDICYALGGS (256 aa)). Residues 144–163 (GAGVSVSCGIPDFRSKDGIY) and 228–231 (QNID) contribute to the NAD(+) site. His-246 (proton acceptor) is an active-site residue. Cys-254, Cys-257, Cys-278, and Cys-281 together coordinate Zn(2+). Residues 318 to 320 (GSS), 343 to 345 (NRE), and Cys-360 contribute to the NAD(+) site. Disordered stretches follow at residues 411-468 (QERR…SDEV) and 520-551 (RNRHESDSSCESCSTVPGSDKSEANPLSRSQS).

This sequence belongs to the sirtuin family. Class I subfamily. As to quaternary structure, interacts with ftt-2 and par-5. Interacts with daf-16 following heat-shock, which causes daf-16 to accumulate in the nucleus. Interaction with daf-16 is promoted by ftt-2. Zn(2+) is required as a cofactor.

It is found in the nucleus. The enzyme catalyses N(6)-acetyl-L-lysyl-[protein] + NAD(+) + H2O = 2''-O-acetyl-ADP-D-ribose + nicotinamide + L-lysyl-[protein]. Its function is as follows. NAD-dependent deacetylase. Required for a reduction of the 'Lys-16' acetylation of histone H4 (H4K16ac) on dosage-compensated X chromosomes in hermaphrodites. Functions upstream of daf-16 in the insulin-like signaling pathway, promoting daf-16 mediated transcriptional activation and increased life-span. May also regulate life-span independently of daf-16 by modulating the transcription of genes involved in the stress response of the endoplasmic reticulum (ER). Acts upstream of the nicotinic acid metabolism pathway, which may be linked to the regulation of longevity. Plays a role in ascaroside-mediated longevity and stress resistance. In Caenorhabditis briggsae, this protein is NAD-dependent protein deacetylase sir-2.1 (sir-2.1).